The following is a 291-amino-acid chain: tRNA U34 carboxymethyltransferase (291 aa).

Residues lysine 61, tryptophan 75, lysine 80, glycine 100, 122 to 124, 149 to 150, tyrosine 169, and arginine 284 contribute to the carboxy-S-adenosyl-L-methionine site; these read DPS and VE.

It belongs to the class I-like SAM-binding methyltransferase superfamily. CmoB family. In terms of assembly, homotetramer.

It catalyses the reaction carboxy-S-adenosyl-L-methionine + 5-hydroxyuridine(34) in tRNA = 5-carboxymethoxyuridine(34) in tRNA + S-adenosyl-L-homocysteine + H(+). Functionally, catalyzes carboxymethyl transfer from carboxy-S-adenosyl-L-methionine (Cx-SAM) to 5-hydroxyuridine (ho5U) to form 5-carboxymethoxyuridine (cmo5U) at position 34 in tRNAs. In Campylobacter jejuni subsp. jejuni serotype O:6 (strain 81116 / NCTC 11828), this protein is tRNA U34 carboxymethyltransferase.